We begin with the raw amino-acid sequence, 326 residues long: MGEGGESLSGAASRFRADWQALDPSGRVCLAVSGGPDSLALMLLMQEVAPRDFCVATVDHGLRAESAAEAAMVAGLCEMRGIAYHTLRLDLAGGSAVQERARKARYAALADLARRDGLSAVVTAHHADDQAETLVMRLNRGAGLRGLAGMRAASSVPGAGEVRLLRPLLGWRRAELVALVEDAGLAPVLDPSNHDHRYERVRIRDVMASTKALLPSGFAASASHLAEADAALEWAVERLWLDIGMSAEGSTWNPPEDLPRVLALRLLERVVMHLGGTVPRGPDLVRWLATLRAGGVATLAGVKGDARSGAWRFSRAPEHRSDRRPD.

Residue 33-38 (SGGPDS) coordinates ATP.

Belongs to the tRNA(Ile)-lysidine synthase family.

It is found in the cytoplasm. It catalyses the reaction cytidine(34) in tRNA(Ile2) + L-lysine + ATP = lysidine(34) in tRNA(Ile2) + AMP + diphosphate + H(+). Its function is as follows. Ligates lysine onto the cytidine present at position 34 of the AUA codon-specific tRNA(Ile) that contains the anticodon CAU, in an ATP-dependent manner. Cytidine is converted to lysidine, thus changing the amino acid specificity of the tRNA from methionine to isoleucine. This Novosphingobium aromaticivorans (strain ATCC 700278 / DSM 12444 / CCUG 56034 / CIP 105152 / NBRC 16084 / F199) protein is tRNA(Ile)-lysidine synthase.